Here is a 397-residue protein sequence, read N- to C-terminus: Elongation factor Tu (397 aa).

The tr-type G domain maps to 10–207 (KPHVNIGTIG…ACDSYIPEPE (198 aa)). The G1 stretch occupies residues 19 to 26 (GHIDHGKT). 19-26 (GHIDHGKT) serves as a coordination point for GTP. Thr26 is a Mg(2+) binding site. Residues 60–64 (GITIA) are G2. Residues 81-84 (DCPG) form a G3 region. Residues 81–85 (DCPGH) and 136–139 (NKCD) each bind GTP. Positions 136–139 (NKCD) are G4. The tract at residues 174–176 (SAL) is G5.

It belongs to the TRAFAC class translation factor GTPase superfamily. Classic translation factor GTPase family. EF-Tu/EF-1A subfamily. Monomer.

The protein resides in the cytoplasm. The enzyme catalyses GTP + H2O = GDP + phosphate + H(+). In terms of biological role, GTP hydrolase that promotes the GTP-dependent binding of aminoacyl-tRNA to the A-site of ribosomes during protein biosynthesis. In Oleidesulfovibrio alaskensis (strain ATCC BAA-1058 / DSM 17464 / G20) (Desulfovibrio alaskensis), this protein is Elongation factor Tu.